Reading from the N-terminus, the 1019-residue chain is MGLHDSFLALLLLLGGAWAQQAEINARVLRAQDCPVDLFFVLDTSESVALRVKPFGDLVAQVKDFTNRFIDKLTERYFRCDRFLAWNAGALHYSDSVVIIKDLTAMPSGRAELKNSVSAINYIGKGTHTDCAIKQGIERLLLGGSHLKENKYLIVVTDGHPLEGYKEPCGGLDDAANEAKHLGIKVFSVAISPHHLDQRLNIIATDHAYRRNFTATSLKPTRDLDVEETINNIIEMIKDNMEQSCCSFECHPPRGPPGPPGDPGHEGERGKPGLPGQKGDAGDPGRPGDMGPVGYQGMKGDKGSRGEKGSRGAKGAKGEKGKRGIDGIDGMKGEAGYPGLPGCKGSPGFDGTQGPPGPKGDPGAYGPKGGKGEPGEDGKPGRQGIPGSPGEKGAPGNRGEPGPLGETGDEGSPGADGPPGERGSNGERGPPGSPGDRGPRGDLGEPGPPGDQGREGPLGPPGDQGEPGPPGPKGYRGDDGPRGNEGPKGSPGAPGLPGDPGLMGERGEDGPPGNGTIGFPGAPGQQGDRGDPGINGTKGYVGPKGDEGEAGDPGNDNPTAGPSGIKGAKGHRGPEGRPGPPGPVGPPGPDECEILDIIMKMCSCCECTCGPVDLLFVLDSSESIGLQNFQIAKDFIIKVIDRLSKDERVKFEPGESRVGVVQYSHNNTQELVAMGDANIDNIGALKQAVKNLKWIAGGTHTGEALQFSKENLLRRFTSNNNVAIVITDGRSDTLRDRTPLTSLCEVTPVVSLGIGDIFRNNPNPDQLNDIACLGMPRRQGLSIQRDNYAELLDDSFLQNITSYVCREKKCPDYTCPITFANPADIMLLVDSSTSVGSKNFDTTKNFVKRLAERFLEASKPAEDSVRVSVVQYSGRNQQKVEVPFQRNYTVIAKAVDNMEFMNEATDVNAALQYIMGLYQRSSRSGAKKKVLVFSDGNSQGITARAIERTVQEVQQAGIEVYVLAVGSQVNEPNVRVLVTGKSTNYDVAYGERHLFRVPDYTSLLRGVFYQTVSRKIAVD.

The N-terminal stretch at 1-19 is a signal peptide; sequence MGLHDSFLALLLLLGGAWA. The 197-residue stretch at 37 to 233 folds into the VWFA 1 domain; it reads DLFFVLDTSE…LDVEETINNI (197 aa). The N-linked (GlcNAc...) asparagine glycan is linked to asparagine 212. The tract at residues 248–588 is disordered; the sequence is FECHPPRGPP…GPPGPVGPPG (341 aa). Positions 253 to 262 are enriched in pro residues; it reads PRGPPGPPGD. Basic and acidic residues-rich tracts occupy residues 299 to 332 and 370 to 380; these read KGDK…DGMK and GKGEPGEDGKP. Low complexity predominate over residues 427–436; that stretch reads ERGPPGSPGD. The Cell attachment site motif lies at 476 to 478; sequence RGD. Asparagine 514 carries an N-linked (GlcNAc...) asparagine glycan. The short motif at 529 to 531 is the Cell attachment site element; the sequence is RGD. A glycan (N-linked (GlcNAc...) asparagine) is linked at asparagine 535. A compositionally biased stretch (pro residues) spans 577-588; sequence RPGPPGPVGPPG. 2 VWFA domains span residues 613 to 800 and 824 to 1012; these read DLLF…LQNI and DIML…YQTV. Asparagine 799 and asparagine 887 each carry an N-linked (GlcNAc...) asparagine glycan.

The protein belongs to the type VI collagen family. As to quaternary structure, trimers composed of three different chains: alpha 1(VI), alpha 2(VI), and alpha 3(VI). In terms of processing, prolines at the third position of the tripeptide repeating unit (G-X-Y) are hydroxylated in some or all of the chains.

It is found in the secreted. Its subcellular location is the extracellular space. It localises to the extracellular matrix. Functionally, collagen VI acts as a cell-binding protein. This chain is Collagen alpha-1(VI) chain (COL6A1), found in Gallus gallus (Chicken).